A 930-amino-acid polypeptide reads, in one-letter code: Endoplasmic reticulum aminopeptidase 1 (930 aa).

Over 1 to 2 (MP) the chain is Cytoplasmic. Residues 3 to 23 (SLLSLVLTFLAVSSPSCCQNS) traverse the membrane as a helical; Signal-anchor for type II membrane protein segment. The Lumenal portion of the chain corresponds to 24–930 (DTASPKASNG…WLQKERQELL (907 aa)). N59 and N143 each carry an N-linked (GlcNAc...) asparagine glycan. Substrate is bound by residues E172 and 306–310 (GAMEN). A Zn(2+)-binding site is contributed by H342. Catalysis depends on E343, which acts as the Proton acceptor. The Zn(2+) site is built by H346 and E365. C393 and C432 form a disulfide bridge. N-linked (GlcNAc...) asparagine glycans are attached at residues N403 and N655. C725 and C732 form a disulfide bridge. 2 N-linked (GlcNAc...) asparagine glycosylation sites follow: N749 and N890.

It belongs to the peptidase M1 family. Monomer. May also exist as a heterodimer; with ERAP2. Interacts with RBMX. It depends on Zn(2+) as a cofactor. In terms of processing, N-glycosylated. In terms of tissue distribution, ubiquitous.

It is found in the endoplasmic reticulum membrane. Functionally, aminopeptidase that plays a central role in peptide trimming, a step required for the generation of most HLA class I-binding peptides. Peptide trimming is essential to customize longer precursor peptides to fit them to the correct length required for presentation on MHC class I molecules. Strongly prefers substrates 9-16 residues long. Rapidly degrades 13-mer to a 9-mer and then stops. Preferentially hydrolyzes the residue Leu and peptides with a hydrophobic C-terminus, while it has weak activity toward peptides with charged C-terminus. May play a role in the inactivation of peptide hormones. May be involved in the regulation of blood pressure through the inactivation of angiotensin II and/or the generation of bradykinin in the kidney. The protein is Endoplasmic reticulum aminopeptidase 1 (Erap1) of Rattus norvegicus (Rat).